Here is a 599-residue protein sequence, read N- to C-terminus: NADH-quinone oxidoreductase subunit C/D (599 aa).

A compositionally biased stretch (polar residues) spans methionine 1–glutamine 15. The disordered stretch occupies residues methionine 1–aspartate 21. The interval methionine 1–glutamate 189 is NADH dehydrogenase I subunit C. Residues aspartate 213 to arginine 599 form an NADH dehydrogenase I subunit D region.

It in the N-terminal section; belongs to the complex I 30 kDa subunit family. This sequence in the C-terminal section; belongs to the complex I 49 kDa subunit family. In terms of assembly, NDH-1 is composed of 13 different subunits. Subunits NuoB, CD, E, F, and G constitute the peripheral sector of the complex.

It is found in the cell inner membrane. It catalyses the reaction a quinone + NADH + 5 H(+)(in) = a quinol + NAD(+) + 4 H(+)(out). Functionally, NDH-1 shuttles electrons from NADH, via FMN and iron-sulfur (Fe-S) centers, to quinones in the respiratory chain. The immediate electron acceptor for the enzyme in this species is believed to be ubiquinone. Couples the redox reaction to proton translocation (for every two electrons transferred, four hydrogen ions are translocated across the cytoplasmic membrane), and thus conserves the redox energy in a proton gradient. The protein is NADH-quinone oxidoreductase subunit C/D of Erwinia tasmaniensis (strain DSM 17950 / CFBP 7177 / CIP 109463 / NCPPB 4357 / Et1/99).